The primary structure comprises 101 residues: Cell division suppressor protein YneA (101 aa).

Positions 35–86 constitute a LysM domain; it reads MTVTVASGDTLWGLAKQYEPAHGLSPDEFIRWVVDVNRLPSSRLTAGEQIVI.

Belongs to the YneA family.

It is found in the cytoplasm. In terms of biological role, inhibits cell division during the SOS response. Affects a later stage of the cell division protein assembly, after the assembly of the Z ring, by probably suppressing recruitment of FtsL and/or DivIC to the division machinery. The sequence is that of Cell division suppressor protein YneA from Geobacillus thermodenitrificans (strain NG80-2).